The sequence spans 185 residues: Acireductone dioxygenase (185 aa).

His97, His99, Glu103, and His141 together coordinate Fe(2+). Residues His97, His99, Glu103, and His141 each contribute to the Ni(2+) site.

This sequence belongs to the acireductone dioxygenase (ARD) family. In terms of assembly, monomer. Fe(2+) serves as cofactor. Ni(2+) is required as a cofactor.

It catalyses the reaction 1,2-dihydroxy-5-(methylsulfanyl)pent-1-en-3-one + O2 = 3-(methylsulfanyl)propanoate + CO + formate + 2 H(+). The enzyme catalyses 1,2-dihydroxy-5-(methylsulfanyl)pent-1-en-3-one + O2 = 4-methylsulfanyl-2-oxobutanoate + formate + 2 H(+). It functions in the pathway amino-acid biosynthesis; L-methionine biosynthesis via salvage pathway; L-methionine from S-methyl-5-thio-alpha-D-ribose 1-phosphate: step 5/6. Catalyzes 2 different reactions between oxygen and the acireductone 1,2-dihydroxy-3-keto-5-methylthiopentene (DHK-MTPene) depending upon the metal bound in the active site. Fe-containing acireductone dioxygenase (Fe-ARD) produces formate and 2-keto-4-methylthiobutyrate (KMTB), the alpha-ketoacid precursor of methionine in the methionine recycle pathway. Ni-containing acireductone dioxygenase (Ni-ARD) produces methylthiopropionate, carbon monoxide and formate, and does not lie on the methionine recycle pathway. The chain is Acireductone dioxygenase from Stenotrophomonas maltophilia (strain R551-3).